Reading from the N-terminus, the 391-residue chain is MAIINMSDLDLQGKRVLIREDLNVPVSNGVVTSDARLRASLPTIELALAKGAAVMVMSHLGRPTEGEYNSEFSMQPVVDYLAKALSCTVRLATDYLDGVEVAVGEVVVFENVRFNKGEKKNDEALSKKMAALCDVYVMDAFGTAHRAEASTNGVGLHAPIACAGPLLAQELEALGKALDNPARPLVAIVGGSKVSTKLTVLESLSGIVDQLVVGGGIANTFIAAAGHNVGKSLYEADLIDEAKRLVANAQSRGGDIPVPTDVVVAGEFSPTAAATLKAVNEVADSDMIFDIGPDSAEALAKIIESAGTIVWNGPVGVFEFDQFGEGTKRIAQAIADSKAFSIAGGGDTLAAVDKYDIADKVSYISTGGGAFLEFLEGKELPAVAMLKQRGA.

Residues 21 to 23, Arg36, 59 to 62, Arg113, and Arg146 each bind substrate; these read DLN and HLGR. Residues Lys197, Glu319, and 345-348 contribute to the ATP site; that span reads GGDT.

Belongs to the phosphoglycerate kinase family. Monomer.

The protein localises to the cytoplasm. The catalysed reaction is (2R)-3-phosphoglycerate + ATP = (2R)-3-phospho-glyceroyl phosphate + ADP. It functions in the pathway carbohydrate degradation; glycolysis; pyruvate from D-glyceraldehyde 3-phosphate: step 2/5. This is Phosphoglycerate kinase from Shewanella sp. (strain MR-4).